A 173-amino-acid polypeptide reads, in one-letter code: RNA pyrophosphohydrolase (173 aa).

In terms of domain architecture, Nudix hydrolase spans 11–164 (PYRKCVGIVV…KKHVYMKVVS (154 aa)). Residues 52–73 (GGIDEDEKPLDAAYRELYEETG) carry the Nudix box motif.

The protein belongs to the Nudix hydrolase family. RppH subfamily. A divalent metal cation serves as cofactor.

Accelerates the degradation of transcripts by removing pyrophosphate from the 5'-end of triphosphorylated RNA, leading to a more labile monophosphorylated state that can stimulate subsequent ribonuclease cleavage. In Bartonella tribocorum (strain CIP 105476 / IBS 506), this protein is RNA pyrophosphohydrolase.